The sequence spans 39 residues: uncharacterized protein (39 aa).

This sequence belongs to the orthopoxvirus A30.5 protein family.

This is an uncharacterized protein from Bos taurus (Bovine).